A 149-amino-acid polypeptide reads, in one-letter code: D-aminoacyl-tRNA deacylase (149 aa).

Positions 137 to 138 (GP) match the Gly-cisPro motif, important for rejection of L-amino acids motif.

The protein belongs to the DTD family. In terms of assembly, homodimer.

The protein resides in the cytoplasm. The catalysed reaction is glycyl-tRNA(Ala) + H2O = tRNA(Ala) + glycine + H(+). It catalyses the reaction a D-aminoacyl-tRNA + H2O = a tRNA + a D-alpha-amino acid + H(+). In terms of biological role, an aminoacyl-tRNA editing enzyme that deacylates mischarged D-aminoacyl-tRNAs. Also deacylates mischarged glycyl-tRNA(Ala), protecting cells against glycine mischarging by AlaRS. Acts via tRNA-based rather than protein-based catalysis; rejects L-amino acids rather than detecting D-amino acids in the active site. By recycling D-aminoacyl-tRNA to D-amino acids and free tRNA molecules, this enzyme counteracts the toxicity associated with the formation of D-aminoacyl-tRNA entities in vivo and helps enforce protein L-homochirality. The sequence is that of D-aminoacyl-tRNA deacylase from Thermotoga petrophila (strain ATCC BAA-488 / DSM 13995 / JCM 10881 / RKU-1).